Reading from the N-terminus, the 445-residue chain is Histidinol dehydrogenase (445 aa).

NAD(+) contacts are provided by Tyr134, Gln198, and Asn226. 3 residues coordinate substrate: Thr249, Gln271, and His274. Gln271 and His274 together coordinate Zn(2+). Active-site proton acceptor residues include Glu340 and His341. Positions 341, 374, 428, and 433 each coordinate substrate. A Zn(2+)-binding site is contributed by Asp374. Position 433 (His433) interacts with Zn(2+).

It belongs to the histidinol dehydrogenase family. Requires Zn(2+) as cofactor.

The catalysed reaction is L-histidinol + 2 NAD(+) + H2O = L-histidine + 2 NADH + 3 H(+). It functions in the pathway amino-acid biosynthesis; L-histidine biosynthesis; L-histidine from 5-phospho-alpha-D-ribose 1-diphosphate: step 9/9. Catalyzes the sequential NAD-dependent oxidations of L-histidinol to L-histidinaldehyde and then to L-histidine. The protein is Histidinol dehydrogenase of Nocardia farcinica (strain IFM 10152).